Reading from the N-terminus, the 296-residue chain is Polyamine aminopropyltransferase (296 aa).

The PABS domain maps to 5–238; the sequence is ELWYETLHAN…GIMTFAWATQ (234 aa). Gln33 is a binding site for S-methyl-5'-thioadenosine. 2 residues coordinate spermidine: His64 and Asp88. S-methyl-5'-thioadenosine is bound by residues Glu108 and 140 to 141; that span reads DG. Asp158 serves as the catalytic Proton acceptor. 158–161 contributes to the spermidine binding site; it reads DCTD. Pro165 is a binding site for S-methyl-5'-thioadenosine.

Belongs to the spermidine/spermine synthase family. In terms of assembly, homodimer or homotetramer.

Its subcellular location is the cytoplasm. It catalyses the reaction S-adenosyl 3-(methylsulfanyl)propylamine + putrescine = S-methyl-5'-thioadenosine + spermidine + H(+). It functions in the pathway amine and polyamine biosynthesis; spermidine biosynthesis; spermidine from putrescine: step 1/1. In terms of biological role, catalyzes the irreversible transfer of a propylamine group from the amino donor S-adenosylmethioninamine (decarboxy-AdoMet) to putrescine (1,4-diaminobutane) to yield spermidine. The sequence is that of Polyamine aminopropyltransferase from Yersinia pseudotuberculosis serotype O:1b (strain IP 31758).